Here is a 348-residue protein sequence, read N- to C-terminus: Lipoyl synthase, mitochondrial (348 aa).

C105, C110, C116, C136, C140, and C143 together coordinate [4Fe-4S] cluster. The region spanning 121-341 (ETGTATATIM…RTXXLVSYVL (221 aa)) is the Radical SAM core domain.

This sequence belongs to the radical SAM superfamily. Lipoyl synthase family. The cofactor is [4Fe-4S] cluster.

Its subcellular location is the mitochondrion. It carries out the reaction [[Fe-S] cluster scaffold protein carrying a second [4Fe-4S](2+) cluster] + N(6)-octanoyl-L-lysyl-[protein] + 2 oxidized [2Fe-2S]-[ferredoxin] + 2 S-adenosyl-L-methionine + 4 H(+) = [[Fe-S] cluster scaffold protein] + N(6)-[(R)-dihydrolipoyl]-L-lysyl-[protein] + 4 Fe(3+) + 2 hydrogen sulfide + 2 5'-deoxyadenosine + 2 L-methionine + 2 reduced [2Fe-2S]-[ferredoxin]. It participates in protein modification; protein lipoylation via endogenous pathway; protein N(6)-(lipoyl)lysine from octanoyl-[acyl-carrier-protein]: step 2/2. Functionally, catalyzes the radical-mediated insertion of two sulfur atoms into the C-6 and C-8 positions of the octanoyl moiety bound to the lipoyl domains of lipoate-dependent enzymes, thereby converting the octanoylated domains into lipoylated derivatives. This chain is Lipoyl synthase, mitochondrial (LIP1), found in Ricinus communis (Castor bean).